The primary structure comprises 77 residues: Acyl carrier protein (77 aa).

The Carrier domain occupies 2–77 (AEVLEKVTKI…DAVKYIEANA (76 aa)). The residue at position 37 (Ser-37) is an O-(pantetheine 4'-phosphoryl)serine.

The protein belongs to the acyl carrier protein (ACP) family. In terms of processing, 4'-phosphopantetheine is transferred from CoA to a specific serine of apo-ACP by AcpS. This modification is essential for activity because fatty acids are bound in thioester linkage to the sulfhydryl of the prosthetic group.

It is found in the cytoplasm. It participates in lipid metabolism; fatty acid biosynthesis. In terms of biological role, carrier of the growing fatty acid chain in fatty acid biosynthesis. The protein is Acyl carrier protein of Listeria innocua serovar 6a (strain ATCC BAA-680 / CLIP 11262).